The sequence spans 214 residues: Melanoregulin (214 aa).

Positions leucine 162–arginine 172 match the Cholesterol-binding sequence motif motif. Residue serine 213 is modified to Phosphoserine.

Belongs to the melanoregulin family. Identified in a complex with RILP and DCTN1; interacts directly with RILP, but does not interact directly with DCTN1. Interacts with PRPH2. Palmitoylated. Palmitoylation is required to maintain the protein at the melanosome membrane. As to expression, detected in melanocytes. Expressed in retina, in retinal pigment epithelium (at protein level). Widely expressed with higher expression in skin, heart, liver, testis and thymus. Detected in retina, in retinal pigment epithelium cells.

It localises to the apical cell membrane. Its subcellular location is the melanosome membrane. It is found in the lysosome membrane. The protein localises to the cytoplasmic vesicle membrane. Functionally, probably functions as a cargo-recognition protein that couples cytoplasmic vesicles to the transport machinery. Plays a role in hair pigmentation, a process that involves shedding of melanosome-containing vesicles from melanocytes, followed by phagocytosis of the melanosome-containing vesicles by keratinocytes. Functions on melanosomes as receptor for RILP and the complex formed by RILP and DCTN1, and thereby contributes to retrograde melanosome transport from the cell periphery to the center. Overexpression causes accumulation of late endosomes and/or lysosomes at the microtubule organising center (MTOC) at the center of the cell. Probably binds cholesterol and requires the presence of cholesterol in membranes to function in microtubule-mediated retrograde organelle transport. Binds phosphatidylinositol 3-phosphate, phosphatidylinositol 4-phosphate, phosphatidylinositol 5-phosphate and phosphatidylinositol 3,5-bisphosphate, but not phosphatidylinositol 3,4-bisphosphate or phosphatidylinositol 4,5-bisphosphate. Required for normal phagosome clearing and normal activation of lysosomal enzymes in lysosomes from retinal pigment epithelium cells. Required for normal degradation of the lipofuscin component N-retinylidene-N-retinylethanolamine (A2E) in the eye. May function in membrane fusion and regulate the biogenesis of disk membranes of photoreceptor rod cells. This chain is Melanoregulin (Mreg), found in Mus musculus (Mouse).